The chain runs to 122 residues: Ribosomal protein eL22-like 1 (122 aa).

3 positions are modified to phosphoserine: Ser112, Ser118, and Ser120.

It belongs to the eukaryotic ribosomal protein eL22 family.

The protein is Ribosomal protein eL22-like 1 (Rpl22l1) of Mus musculus (Mouse).